The following is a 537-amino-acid chain: Multidrug resistance protein Stp (537 aa).

Helical transmembrane passes span 6 to 26 (LLTL…ALIV), 46 to 66 (WVVA…ATLA), 77 to 97 (IGVS…SIAV), 104 to 124 (AQGL…SAAF), 136 to 156 (IWTA…GLLV), 163 to 183 (SIFY…LCYV), 200 to 220 (LLFI…PQIG), 223 to 243 (SVQT…FVWL), 262 to 282 (YALA…MLLL), 300 to 320 (LMIL…GHLV), 327 to 347 (VPIL…IFSE), 352 to 372 (ALVL…LTPI), 397 to 417 (AIGS…WLSA), and 478 to 498 (VALL…WRWF).

The protein belongs to the major facilitator superfamily. EmrB family.

It localises to the cell membrane. Contributes to spectinomycin and tetracycline resistance. This Mycobacterium tuberculosis (strain ATCC 25618 / H37Rv) protein is Multidrug resistance protein Stp (stp).